We begin with the raw amino-acid sequence, 276 residues long: BES1/BZR1 homolog protein 1 (276 aa).

Disordered stretches follow at residues 1 to 30 (MTAS…RERR), 76 to 125 (TTYR…PTRF), and 155 to 191 (SAPV…PTRR). The segment at 14–87 (RMPTWKEREN…YRKGSRPTET (74 aa)) is required for DNA-binding. Polar residues predominate over residues 84–103 (PTETTVPCSSIQLSPQSSAF). Residues 104–122 (QSPIPSYQASPSSSSYPSP) are compositionally biased toward low complexity. The residue at position 159 (T159) is a Phosphothreonine. Residues 164–174 (SPRRSNPRLPR) are compositionally biased toward low complexity. A compositionally biased stretch (polar residues) spans 175–189 (WQSSNFPVSAPSSPT).

The protein belongs to the BZR/LAT61 family. Post-translationally, phosphorylated. Phosphorylation increases protein degradation.

The sequence is that of BES1/BZR1 homolog protein 1 (BEH1) from Arabidopsis thaliana (Mouse-ear cress).